A 265-amino-acid polypeptide reads, in one-letter code: uncharacterized protein (265 aa).

The active site involves Glu47.

The protein belongs to the PhzF family.

This is an uncharacterized protein from Halalkalibacterium halodurans (strain ATCC BAA-125 / DSM 18197 / FERM 7344 / JCM 9153 / C-125) (Bacillus halodurans).